The following is a 408-amino-acid chain: Peptidase T (408 aa).

His-78 lines the Zn(2+) pocket. Asp-80 is an active-site residue. Asp-140 provides a ligand contact to Zn(2+). Residue Glu-173 is the Proton acceptor of the active site. Zn(2+) is bound by residues Glu-174, Asp-196, and His-379.

The protein belongs to the peptidase M20B family. The cofactor is Zn(2+).

It localises to the cytoplasm. It catalyses the reaction Release of the N-terminal residue from a tripeptide.. Its function is as follows. Cleaves the N-terminal amino acid of tripeptides. In Shigella flexneri serotype 5b (strain 8401), this protein is Peptidase T.